The sequence spans 256 residues: Ras-related protein Rab-26 (256 aa).

Residues 1–51 are disordered; the sequence is MSRKKTPKSKGASTPAASTLPTANGARPARSGTALSGPDAPPNGPLQPGRP. Positions 12–23 are enriched in low complexity; the sequence is ASTPAASTLPTA. Ser72, Gly73, Val74, Gly75, Lys76, Thr77, Cys78, Ser95, and Thr96 together coordinate GTP. Thr77 lines the Mg(2+) pocket. 2 consecutive short sequence motifs (switch) follow at residues 86–101 and 119–136; these read GAFL…GIDF and DTAG…YYRD. Positions 96 and 119 each coordinate Mg(2+). GTP contacts are provided by Gly122, Asn177, Lys178, Asp180, Ala208, and Lys209. Residues Cys253 and Cys254 are each lipidated (S-geranylgeranyl cysteine).

Belongs to the small GTPase superfamily. Rab family. As to quaternary structure, interacts with RIMS1. Interacts with ADRA2B. Mg(2+) serves as cofactor. In terms of tissue distribution, predominantly expressed in brain.

It localises to the golgi apparatus membrane. It is found in the cytoplasmic vesicle. Its subcellular location is the secretory vesicle membrane. The catalysed reaction is GTP + H2O = GDP + phosphate + H(+). Regulated by guanine nucleotide exchange factors (GEFs) which promote the exchange of bound GDP for free GTP. Regulated by GTPase activating proteins (GAPs) which increase the GTP hydrolysis activity. Inhibited by GDP dissociation inhibitors (GDIs). In terms of biological role, the small GTPases Rab are key regulators of intracellular membrane trafficking, from the formation of transport vesicles to their fusion with membranes. Rabs cycle between an inactive GDP-bound form and an active GTP-bound form that is able to recruit to membranes different set of downstream effectors directly responsible for vesicle formation, movement, tethering and fusion. RAB26 mediates transport of ADRA2A and ADRA2B from the Golgi to the cell membrane. Plays a role in the maturation of zymogenic granules and in pepsinogen secretion in the stomach. Plays a role in the secretion of amylase from acinar granules in the parotid gland. The protein is Ras-related protein Rab-26 of Homo sapiens (Human).